We begin with the raw amino-acid sequence, 267 residues long: Regulatory protein RecX (267 aa).

Belongs to the RecX family.

Its subcellular location is the cytoplasm. Its function is as follows. Modulates RecA activity. The protein is Regulatory protein RecX of Staphylococcus epidermidis (strain ATCC 12228 / FDA PCI 1200).